The primary structure comprises 282 residues: tRNA U34 carboxymethyltransferase (282 aa).

Carboxy-S-adenosyl-L-methionine contacts are provided by residues lysine 54, tryptophan 68, lysine 73, glycine 92, 114–116, tyrosine 161, and arginine 276; that span reads DPS.

It belongs to the class I-like SAM-binding methyltransferase superfamily. CmoB family. In terms of assembly, homotetramer.

It catalyses the reaction carboxy-S-adenosyl-L-methionine + 5-hydroxyuridine(34) in tRNA = 5-carboxymethoxyuridine(34) in tRNA + S-adenosyl-L-homocysteine + H(+). Functionally, catalyzes carboxymethyl transfer from carboxy-S-adenosyl-L-methionine (Cx-SAM) to 5-hydroxyuridine (ho5U) to form 5-carboxymethoxyuridine (cmo5U) at position 34 in tRNAs. This Campylobacter fetus subsp. fetus (strain 82-40) protein is tRNA U34 carboxymethyltransferase.